Here is a 255-residue protein sequence, read N- to C-terminus: MEILPAIDLLDGACVRLHKGDYEQVTRFSDDPVAQALSWQQQGATRLHLVDLDGAKRGEPVNDSAVQAITSALDIPVQLGGGVRSLERAEQLLACGLDRVILGTVAIEQPDLVRSLAERYPGRIVVGIDAKDGRVATRGWIEQSDVLATDLARTFSSSGIAAIITTDIATDGTLAGPNLEALRTMAASSSVPVIASGGIGCMADLLSLLPLEPLGVSGVIVGRALYDGRVDLAEAVRALAEPRLQDITAVAADLA.

Asp8 functions as the Proton acceptor in the catalytic mechanism. The active-site Proton donor is the Asp129.

This sequence belongs to the HisA/HisF family.

The protein resides in the cytoplasm. The catalysed reaction is 1-(5-phospho-beta-D-ribosyl)-5-[(5-phospho-beta-D-ribosylamino)methylideneamino]imidazole-4-carboxamide = 5-[(5-phospho-1-deoxy-D-ribulos-1-ylimino)methylamino]-1-(5-phospho-beta-D-ribosyl)imidazole-4-carboxamide. It participates in amino-acid biosynthesis; L-histidine biosynthesis; L-histidine from 5-phospho-alpha-D-ribose 1-diphosphate: step 4/9. This is 1-(5-phosphoribosyl)-5-[(5-phosphoribosylamino)methylideneamino] imidazole-4-carboxamide isomerase from Parasynechococcus marenigrum (strain WH8102).